The chain runs to 307 residues: Cytochrome c1, heme protein, mitochondrial (307 aa).

A mitochondrion-targeting transit peptide spans 1–56 (MFQFVKKKNEFLKFARLGSRAFTQNAQKTHSKGSNIALVSSSLLSVGMIALYYNVY). Residues 57 to 269 (GPSLSAGTPK…EPELDIRKKM (213 aa)) are Mitochondrial intermembrane-facing. The region spanning 89 to 259 (ASLRRGFQVY…DVVNFLHWAS (171 aa)) is the Cytochrome c domain. The heme c site is built by cysteine 102, cysteine 105, histidine 106, and methionine 225. Residues 270–287 (GFQVITVLTILTALSMWY) traverse the membrane as a helical segment. Residues 288–307 (KRFKWTPIKNRKIFYQRPIK) lie on the Mitochondrial matrix side of the membrane.

Belongs to the cytochrome c family. As to quaternary structure, component of the ubiquinol-cytochrome c oxidoreductase (cytochrome b-c1 complex, complex III, CIII), a multisubunit enzyme composed of 3 respiratory subunits cytochrome b, cytochrome c1 and Rieske protein, 2 core protein subunits, and additional low-molecular weight protein subunits. The complex exists as an obligatory dimer and forms supercomplexes (SCs) in the inner mitochondrial membrane with cytochrome c oxidase (complex IV, CIV). Requires heme c as cofactor.

It is found in the mitochondrion inner membrane. The catalysed reaction is a quinol + 2 Fe(III)-[cytochrome c](out) = a quinone + 2 Fe(II)-[cytochrome c](out) + 2 H(+)(out). Functionally, component of the ubiquinol-cytochrome c oxidoreductase, a multisubunit transmembrane complex that is part of the mitochondrial electron transport chain which drives oxidative phosphorylation. The respiratory chain contains 3 multisubunit complexes succinate dehydrogenase (complex II, CII), ubiquinol-cytochrome c oxidoreductase (cytochrome b-c1 complex, complex III, CIII) and cytochrome c oxidase (complex IV, CIV), that cooperate to transfer electrons derived from NADH and succinate to molecular oxygen, creating an electrochemical gradient over the inner membrane that drives transmembrane transport and the ATP synthase. The cytochrome b-c1 complex catalyzes electron transfer from ubiquinol to cytochrome c, linking this redox reaction to translocation of protons across the mitochondrial inner membrane, with protons being carried across the membrane as hydrogens on the quinol. In the process called Q cycle, 2 protons are consumed from the matrix, 4 protons are released into the intermembrane space and 2 electrons are passed to cytochrome c. Cytochrome c1 is a catalytic core subunit containing a c-type heme. It transfers electrons from the [2Fe-2S] iron-sulfur cluster of the Rieske protein to cytochrome c. This chain is Cytochrome c1, heme protein, mitochondrial (cyt1), found in Schizosaccharomyces pombe (strain 972 / ATCC 24843) (Fission yeast).